A 325-amino-acid polypeptide reads, in one-letter code: MHICSLIPILFPKLLTCGLALYSAVVLWLKVSVIGSFIQGTVLLTLVPLILYAYFSTIAVGPGSPLDFEELRIRDLNDVETGMEFPPDFLAAKTVTLDSTGRHRYCVKCKVWKPDRCHHCSACDKCYLRRDHHCVWFPGCIGYNNHKFFLHFLLYASVYAFWICIITTWDLVVWFRAHSYERELLNVHLVCLWALSAAATVALTAFCAFNIYLVCKNETTGEYQRRSTLNSDLEMYADCTNGPRTVIENPFDLGSRRRNWAAVMGDTWKEWLLPIRTTASQKARHSFDESGLYFKIDEQAHAKLAESMALQARLITRFNSKRAVQ.

Residues 1-8 (MHICSLIP) lie on the Cytoplasmic side of the membrane. Residues 9 to 29 (ILFPKLLTCGLALYSAVVLWL) traverse the membrane as a helical segment. Lys30 is a topological domain (lumenal). Residues 31-51 (VSVIGSFIQGTVLLTLVPLIL) traverse the membrane as a helical segment. Over 52–147 (YAYFSTIAVG…PGCIGYNNHK (96 aa)) the chain is Cytoplasmic. Residues 104 to 154 (RYCVKCKVWKPDRCHHCSACDKCYLRRDHHCVWFPGCIGYNNHKFFLHFLL) form the DHHC domain. Residues 148–168 (FFLHFLLYASVYAFWICIITT) form a helical membrane-spanning segment. Topologically, residues 169–188 (WDLVVWFRAHSYERELLNVH) are lumenal. The helical transmembrane segment at 189-209 (LVCLWALSAAATVALTAFCAF) threads the bilayer. At 210 to 325 (NIYLVCKNET…TRFNSKRAVQ (116 aa)) the chain is on the cytoplasmic side.

Belongs to the DHHC palmitoyltransferase family. PFA3 subfamily. Autopalmitoylated.

It is found in the vacuole membrane. It catalyses the reaction L-cysteinyl-[protein] + hexadecanoyl-CoA = S-hexadecanoyl-L-cysteinyl-[protein] + CoA. Its function is as follows. Palmitoyltransferase specific for VAC8. Palmitoylates VAC8 at one or more of its N-terminal cysteine residues, which is required for its proper membrane localization. In Eremothecium gossypii (strain ATCC 10895 / CBS 109.51 / FGSC 9923 / NRRL Y-1056) (Yeast), this protein is Palmitoyltransferase PFA3 (PFA3).